The primary structure comprises 229 residues: MEKKKVFIPFLYLISIVFLPWWIYLSFQKSLESWVTTWWNTKQSETFLNDIQEKKLLEKFIELEELRLLDEMIKEYPETQLQKLGIGIHNETIQLIKMHNEDCIHMILHFSTNLICFLILGGYSILGNKELILLNSWVQEFLYNLSDTIKAFSILLVTDLCIGFHSPQGWELLIESIYKDFGFADNDQIISSLVSTFPVILDTILKYWIFRSLNRVSPSLVVIYHSMND.

The next 4 helical transmembrane spans lie at 7–27 (FIPF…YLSF), 106–126 (MILH…YSIL), 154–174 (ILLV…ELLI), and 189–209 (IISS…KYWI).

It belongs to the CemA family.

It is found in the plastid. It localises to the chloroplast inner membrane. The enzyme catalyses K(+)(in) + H(+)(out) = K(+)(out) + H(+)(in). In terms of biological role, contributes to K(+)/H(+) antiport activity by supporting proton efflux to control proton extrusion and homeostasis in chloroplasts in a light-dependent manner to modulate photosynthesis. Prevents excessive induction of non-photochemical quenching (NPQ) under continuous-light conditions. Indirectly promotes efficient inorganic carbon uptake into chloroplasts. This chain is Potassium/proton antiporter CemA, found in Spinacia oleracea (Spinach).